We begin with the raw amino-acid sequence, 106 residues long: Urease subunit beta (106 aa).

This sequence belongs to the urease beta subunit family. Heterotrimer of UreA (gamma), UreB (beta) and UreC (alpha) subunits. Three heterotrimers associate to form the active enzyme.

The protein resides in the cytoplasm. The enzyme catalyses urea + 2 H2O + H(+) = hydrogencarbonate + 2 NH4(+). It functions in the pathway nitrogen metabolism; urea degradation; CO(2) and NH(3) from urea (urease route): step 1/1. This chain is Urease subunit beta, found in Prochlorococcus marinus (strain AS9601).